We begin with the raw amino-acid sequence, 98 residues long: MALTYMNMALAFTVSLLGLLMYRSHLMSSLLCLEGMMLSLFVTMSLTILNSNLVLASMIPIILLVFAACEAALGLSLLVMVSNTYGVDYVQNLNLLQC.

The next 3 membrane-spanning stretches (helical) occupy residues 1-21 (MALT…GLLM), 29-49 (SLLC…LTIL), and 61-81 (IILL…LVMV).

This sequence belongs to the complex I subunit 4L family. In terms of assembly, core subunit of respiratory chain NADH dehydrogenase (Complex I) which is composed of 45 different subunits.

Its subcellular location is the mitochondrion inner membrane. It carries out the reaction a ubiquinone + NADH + 5 H(+)(in) = a ubiquinol + NAD(+) + 4 H(+)(out). Functionally, core subunit of the mitochondrial membrane respiratory chain NADH dehydrogenase (Complex I) which catalyzes electron transfer from NADH through the respiratory chain, using ubiquinone as an electron acceptor. Part of the enzyme membrane arm which is embedded in the lipid bilayer and involved in proton translocation. In Pteropus dasymallus (Ryukyu flying fox), this protein is NADH-ubiquinone oxidoreductase chain 4L (MT-ND4L).